We begin with the raw amino-acid sequence, 473 residues long: Photosystem II CP43 reaction center protein (473 aa).

The propeptide occupies 1-14; sequence MKTLYSLRRFYPVE. Residue threonine 15 is modified to N-acetylthreonine. Phosphothreonine is present on threonine 15. 5 helical membrane passes run 69–93, 134–155, 178–200, 255–275, and 291–312; these read LFEV…PHLA, LLGP…KDRN, KALY…RKIT, KPFA…LSYS, and WFNN…ASQA. A [CaMn4O5] cluster-binding site is contributed by glutamate 367. The helical transmembrane segment at 447–471 threads the bilayer; that stretch reads RARAAAAGFEKGIDRDFEPALSMTP.

This sequence belongs to the PsbB/PsbC family. PsbC subfamily. PSII is composed of 1 copy each of membrane proteins PsbA, PsbB, PsbC, PsbD, PsbE, PsbF, PsbH, PsbI, PsbJ, PsbK, PsbL, PsbM, PsbT, PsbX, PsbY, PsbZ, Psb30/Ycf12, at least 3 peripheral proteins of the oxygen-evolving complex and a large number of cofactors. It forms dimeric complexes. Binds multiple chlorophylls and provides some of the ligands for the Ca-4Mn-5O cluster of the oxygen-evolving complex. It may also provide a ligand for a Cl- that is required for oxygen evolution. PSII binds additional chlorophylls, carotenoids and specific lipids. is required as a cofactor.

It is found in the plastid. The protein localises to the chloroplast thylakoid membrane. Its function is as follows. One of the components of the core complex of photosystem II (PSII). It binds chlorophyll and helps catalyze the primary light-induced photochemical processes of PSII. PSII is a light-driven water:plastoquinone oxidoreductase, using light energy to abstract electrons from H(2)O, generating O(2) and a proton gradient subsequently used for ATP formation. This chain is Photosystem II CP43 reaction center protein, found in Oenothera argillicola (Appalachian evening primrose).